The following is a 365-amino-acid chain: tRNA-specific 2-thiouridylase MnmA (365 aa).

ATP contacts are provided by residues 14–21 (AMSGGVDS) and leucine 40. The active-site Nucleophile is the cysteine 108. Residues cysteine 108 and cysteine 204 are joined by a disulfide bond. ATP is bound at residue glycine 132. An interaction with tRNA region spans residues 154–156 (KDQ). Cysteine 204 functions as the Cysteine persulfide intermediate in the catalytic mechanism.

The protein belongs to the MnmA/TRMU family.

The protein resides in the cytoplasm. The catalysed reaction is S-sulfanyl-L-cysteinyl-[protein] + uridine(34) in tRNA + AH2 + ATP = 2-thiouridine(34) in tRNA + L-cysteinyl-[protein] + A + AMP + diphosphate + H(+). Catalyzes the 2-thiolation of uridine at the wobble position (U34) of tRNA, leading to the formation of s(2)U34. The chain is tRNA-specific 2-thiouridylase MnmA from Rickettsia akari (strain Hartford).